Consider the following 99-residue polypeptide: Probable non-specific lipid-transfer protein AKCS9 (99 aa).

The signal sequence occupies residues Met1–Thr33. Intrachain disulfides connect Cys34–Cys68, Cys42–Cys56, Cys57–Cys92, and Cys66–Cys99.

It belongs to the plant LTP family. In terms of tissue distribution, expressed in most tissues except nodules.

Potential lipid transfer protein. This is Probable non-specific lipid-transfer protein AKCS9 from Vigna unguiculata (Cowpea).